The chain runs to 189 residues: MSKKHMKGNGGEVPENSEMSGSEELVAVEPGEPDYRELLARKEEELKQSQDRLLRMAAELDNTRKRLEREKSEGIAYANEGLMKDLLPVLDNLERALEHSENEADCGSLVEGVRMTLKGFLDSLARFGCTPFESVGNAFDPNFHEAVMQEEVADYPERTVIREFQKGYTLKERLLRPAMVVVSKAAGDT.

Positions 1–31 (MSKKHMKGNGGEVPENSEMSGSEELVAVEPG) are disordered.

Belongs to the GrpE family. As to quaternary structure, homodimer.

It localises to the cytoplasm. Participates actively in the response to hyperosmotic and heat shock by preventing the aggregation of stress-denatured proteins, in association with DnaK and GrpE. It is the nucleotide exchange factor for DnaK and may function as a thermosensor. Unfolded proteins bind initially to DnaJ; upon interaction with the DnaJ-bound protein, DnaK hydrolyzes its bound ATP, resulting in the formation of a stable complex. GrpE releases ADP from DnaK; ATP binding to DnaK triggers the release of the substrate protein, thus completing the reaction cycle. Several rounds of ATP-dependent interactions between DnaJ, DnaK and GrpE are required for fully efficient folding. The protein is Protein GrpE of Syntrophobacter fumaroxidans (strain DSM 10017 / MPOB).